Consider the following 158-residue polypeptide: Transcription elongation factor GreA (158 aa).

A coiled-coil region spans residues 14 to 76 (VKKLEEELEY…QIENMLKNAN (63 aa)).

The protein belongs to the GreA/GreB family.

In terms of biological role, necessary for efficient RNA polymerase transcription elongation past template-encoded arresting sites. The arresting sites in DNA have the property of trapping a certain fraction of elongating RNA polymerases that pass through, resulting in locked ternary complexes. Cleavage of the nascent transcript by cleavage factors such as GreA or GreB allows the resumption of elongation from the new 3'terminus. GreA releases sequences of 2 to 3 nucleotides. This chain is Transcription elongation factor GreA, found in Clostridium acetobutylicum (strain ATCC 824 / DSM 792 / JCM 1419 / IAM 19013 / LMG 5710 / NBRC 13948 / NRRL B-527 / VKM B-1787 / 2291 / W).